The sequence spans 461 residues: Porin AaxA (461 aa).

The N-terminal stretch at 1–22 (MSFRSVLLTALLSLSFTTTMQA) is a signal peptide.

It belongs to the OprB family.

Its subcellular location is the cell outer membrane. Functionally, facilitates L-arginine uptake, as part of the AaxABC system. The arginine uptake by the bacterium in the macrophage may be a virulence factor against the host innate immune response. The sequence is that of Porin AaxA (aaxA) from Chlamydia trachomatis serovar L2 (strain ATCC VR-902B / DSM 19102 / 434/Bu).